The following is a 380-amino-acid chain: Cytochrome b (380 aa).

A run of 4 helical transmembrane segments spans residues 33 to 53, 77 to 98, 113 to 133, and 178 to 198; these read FGSL…FLAM, WLIR…YMHI, WNIG…GYVL, and FFAF…LHLL. Heme b contacts are provided by His-83 and His-97. 2 residues coordinate heme b: His-182 and His-196. His-201 is an a ubiquinone binding site. Transmembrane regions (helical) follow at residues 226–246, 288–308, 320–340, and 347–367; these read YKDL…ALFA, LGGV…PILH, LTQF…WIGG, and FIII…VLSP.

This sequence belongs to the cytochrome b family. The cytochrome bc1 complex contains 3 respiratory subunits (MT-CYB, CYC1 and UQCRFS1), 2 core proteins (UQCRC1 and UQCRC2) and probably 6 low-molecular weight proteins. Heme b is required as a cofactor.

The protein localises to the mitochondrion inner membrane. Its function is as follows. Component of the ubiquinol-cytochrome c reductase complex (complex III or cytochrome b-c1 complex) that is part of the mitochondrial respiratory chain. The b-c1 complex mediates electron transfer from ubiquinol to cytochrome c. Contributes to the generation of a proton gradient across the mitochondrial membrane that is then used for ATP synthesis. The sequence is that of Cytochrome b (mt-cyb) from Oncorhynchus mykiss (Rainbow trout).